A 268-amino-acid chain; its full sequence is MSGGIEALELKEDDIRLMVAAKVHLGSTNANYQMQQYVYDRNDEGNHIIHLNKTWEKLLLAARAICAIENPADVVIIGGQPTWQRGALKFGHYTGTTSVPGRFTPGAFTNQIQSGFKEPRLLIVCDPKGDHQPVREGSAVNIPVIGFCNTDSPLQCVDIGIPCNNDKYSIALMLWMLAREVRRIWGLDPRSQPGDVIMDLFLMREHVDEPPEGPEGEAQEPPFEQGKFDAAEAEAPEWPAESVSPRCWNAGARFRWCWWQLDSLRCKG.

A laminin-binding region spans residues 161-179 (IPCNNDKYSIALMLWMLAR).

This sequence belongs to the universal ribosomal protein uS2 family. Component of the small ribosomal subunit. Mature ribosomes consist of a small (40S) and a large (60S) subunit. The 40S subunit contains about 33 different proteins and 1 molecule of RNA (18S). The 60S subunit contains about 49 different proteins and 3 molecules of RNA (28S, 5.8S and 5S). Interacts with ribosomal protein S21.

It localises to the cytoplasm. Functionally, required for the assembly and/or stability of the 40S ribosomal subunit. Required for the processing of the 20S rRNA-precursor to mature 18S rRNA in a late step of the maturation of 40S ribosomal subunits. Binds laminin. The polypeptide is Small ribosomal subunit protein uS2 (egmo3) (Echinococcus granulosus (Hydatid tapeworm)).